Consider the following 481-residue polypeptide: Cysteine--tRNA ligase (481 aa).

Zn(2+) is bound at residue Cys-29. The 'HIGH' region motif lies at 31-41 (VTVYDHCHIGH). Zn(2+) contacts are provided by Cys-209, His-234, and Glu-238. The short motif at 266 to 270 (KMSKS) is the 'KMSKS' region element. Residue Lys-269 coordinates ATP.

The protein belongs to the class-I aminoacyl-tRNA synthetase family. In terms of assembly, monomer. Requires Zn(2+) as cofactor.

It is found in the cytoplasm. The catalysed reaction is tRNA(Cys) + L-cysteine + ATP = L-cysteinyl-tRNA(Cys) + AMP + diphosphate. This is Cysteine--tRNA ligase from Geobacter sulfurreducens (strain ATCC 51573 / DSM 12127 / PCA).